Here is a 377-residue protein sequence, read N- to C-terminus: Glutamate 5-kinase (377 aa).

Lys-22 contributes to the ATP binding site. Substrate contacts are provided by Ser-62, Asp-149, and Asn-161. Residues Thr-181–Asp-182 and Thr-223–Lys-229 contribute to the ATP site. In terms of domain architecture, PUA spans Arg-285–Gln-363.

This sequence belongs to the glutamate 5-kinase family.

Its subcellular location is the cytoplasm. It carries out the reaction L-glutamate + ATP = L-glutamyl 5-phosphate + ADP. It participates in amino-acid biosynthesis; L-proline biosynthesis; L-glutamate 5-semialdehyde from L-glutamate: step 1/2. In terms of biological role, catalyzes the transfer of a phosphate group to glutamate to form L-glutamate 5-phosphate. This chain is Glutamate 5-kinase, found in Bifidobacterium longum subsp. infantis (strain ATCC 15697 / DSM 20088 / JCM 1222 / NCTC 11817 / S12).